The chain runs to 206 residues: Ribosomal RNA large subunit methyltransferase E (206 aa).

G60, W62, D80, D96, and D121 together coordinate S-adenosyl-L-methionine. The active-site Proton acceptor is the K161.

The protein belongs to the class I-like SAM-binding methyltransferase superfamily. RNA methyltransferase RlmE family.

The protein localises to the cytoplasm. The catalysed reaction is uridine(2552) in 23S rRNA + S-adenosyl-L-methionine = 2'-O-methyluridine(2552) in 23S rRNA + S-adenosyl-L-homocysteine + H(+). Functionally, specifically methylates the uridine in position 2552 of 23S rRNA at the 2'-O position of the ribose in the fully assembled 50S ribosomal subunit. This Nitrosospira multiformis (strain ATCC 25196 / NCIMB 11849 / C 71) protein is Ribosomal RNA large subunit methyltransferase E.